Here is a 218-residue protein sequence, read N- to C-terminus: Probable nicotinate-nucleotide adenylyltransferase (218 aa).

This sequence belongs to the NadD family.

It catalyses the reaction nicotinate beta-D-ribonucleotide + ATP + H(+) = deamido-NAD(+) + diphosphate. The protein operates within cofactor biosynthesis; NAD(+) biosynthesis; deamido-NAD(+) from nicotinate D-ribonucleotide: step 1/1. Functionally, catalyzes the reversible adenylation of nicotinate mononucleotide (NaMN) to nicotinic acid adenine dinucleotide (NaAD). This is Probable nicotinate-nucleotide adenylyltransferase from Sodalis glossinidius (strain morsitans).